We begin with the raw amino-acid sequence, 740 residues long: Probable type IV piliation system protein DR_0774 (740 aa).

The N-terminal stretch at 1–20 (MNKRHALLLTAVLGMATAYA) is a signal peptide.

It belongs to the bacterial secretin family.

The protein localises to the cell envelope. Could be part of the type IV piliation system (T4P). May contribute at the cohesion between the S-layer and the outer membrane by forming oligomers. Could also be the main channel through which trafficking is managed. The polypeptide is Probable type IV piliation system protein DR_0774 (Deinococcus radiodurans (strain ATCC 13939 / DSM 20539 / JCM 16871 / CCUG 27074 / LMG 4051 / NBRC 15346 / NCIMB 9279 / VKM B-1422 / R1)).